The primary structure comprises 488 residues: Microtubule-destabilizing protein 60 (488 aa).

Polar residues predominate over residues 25–56; sequence AQEVSRFSENSNPNFVSHSTPLEKSSKSSAQK. 3 disordered regions span residues 25-71, 262-304, and 436-457; these read AQEV…VFSP, HASV…TKKQ, and DRPFIPKRSNKHPTVPRDPKFN. The span at 264-280 shows a compositional bias: low complexity; it reads SVSSSWDNSVSSLNSNG.

This sequence belongs to the TPX2 family.

It is found in the cytoplasm. The protein localises to the cytoskeleton. Its function is as follows. Binds directly to microtubules. Microtubule-destabilizing protein involved in the PIF3-dependent positive regulation of hypocotyl cell elongation via the modulation of cortical microtubules dynamic in response to light and ethylene signaling. Promotes submergence-induced and ethylene-dependent underwater hypocotyl elongation. The sequence is that of Microtubule-destabilizing protein 60 from Arabidopsis thaliana (Mouse-ear cress).